The sequence spans 512 residues: Bifunctional purine biosynthesis protein PurH (512 aa).

An MGS-like domain is found at 1 to 146 (MTIKRALISV…KNHQDVTVIV (146 aa)).

This sequence belongs to the PurH family.

The enzyme catalyses (6R)-10-formyltetrahydrofolate + 5-amino-1-(5-phospho-beta-D-ribosyl)imidazole-4-carboxamide = 5-formamido-1-(5-phospho-D-ribosyl)imidazole-4-carboxamide + (6S)-5,6,7,8-tetrahydrofolate. It carries out the reaction IMP + H2O = 5-formamido-1-(5-phospho-D-ribosyl)imidazole-4-carboxamide. The protein operates within purine metabolism; IMP biosynthesis via de novo pathway; 5-formamido-1-(5-phospho-D-ribosyl)imidazole-4-carboxamide from 5-amino-1-(5-phospho-D-ribosyl)imidazole-4-carboxamide (10-formyl THF route): step 1/1. It functions in the pathway purine metabolism; IMP biosynthesis via de novo pathway; IMP from 5-formamido-1-(5-phospho-D-ribosyl)imidazole-4-carboxamide: step 1/1. The chain is Bifunctional purine biosynthesis protein PurH from Bacillus subtilis (strain 168).